Consider the following 442-residue polypeptide: Exodeoxyribonuclease 7 large subunit (442 aa).

The interval 1 to 38 is disordered; sequence MSDSTQFSLFDSGDDEPAKVTAPKRKVARKKRSSSSSD. Over residues 22-33 the composition is skewed to basic residues; it reads APKRKVARKKRS.

Belongs to the XseA family. As to quaternary structure, heterooligomer composed of large and small subunits.

Its subcellular location is the cytoplasm. The enzyme catalyses Exonucleolytic cleavage in either 5'- to 3'- or 3'- to 5'-direction to yield nucleoside 5'-phosphates.. Functionally, bidirectionally degrades single-stranded DNA into large acid-insoluble oligonucleotides, which are then degraded further into small acid-soluble oligonucleotides. In Rhodopirellula baltica (strain DSM 10527 / NCIMB 13988 / SH1), this protein is Exodeoxyribonuclease 7 large subunit.